A 356-amino-acid chain; its full sequence is MQSITEKIDIKALTLEELKASLKIIGEKEFRAKQIYEWLHVKLVRDFEEMTNLSKELRAKLASEYELICVNDLERYESKMDGTVKYLFRLSDGNVVECVLMKYHHGNSVCISSQVGCRMGCRFCASTLGGLTRNLKTSEMLDEVYQIQRLSGERVSNIVIMGTGEPMDNYDNFVKFIRMISSSDGLNISQRNITVSTCGIVPKMRALAEEGFAITLALSLHAPNDEERAKIMPVANSYQLQDVLNACDYYYEKTGRRVSYEYSLVDGVNDTAACAKELSRLLKGKNCHVNLIPVNPIKERDYKRSTGNNIQNFKNILEKNRINVTIRREMGSDINAACGQLRKSYTDKTMVQEVNL.

Catalysis depends on Glu97, which acts as the Proton acceptor. The Radical SAM core domain occupies 103-333 (YHHGNSVCIS…VTIRREMGSD (231 aa)). Cys110 and Cys338 form a disulfide bridge. Cys117, Cys121, and Cys124 together coordinate [4Fe-4S] cluster. Residues 164–165 (GE), Ser196, 219–221 (SLH), and Asn295 contribute to the S-adenosyl-L-methionine site. Cys338 (S-methylcysteine intermediate) is an active-site residue.

This sequence belongs to the radical SAM superfamily. RlmN family. It depends on [4Fe-4S] cluster as a cofactor.

It localises to the cytoplasm. The enzyme catalyses adenosine(2503) in 23S rRNA + 2 reduced [2Fe-2S]-[ferredoxin] + 2 S-adenosyl-L-methionine = 2-methyladenosine(2503) in 23S rRNA + 5'-deoxyadenosine + L-methionine + 2 oxidized [2Fe-2S]-[ferredoxin] + S-adenosyl-L-homocysteine. The catalysed reaction is adenosine(37) in tRNA + 2 reduced [2Fe-2S]-[ferredoxin] + 2 S-adenosyl-L-methionine = 2-methyladenosine(37) in tRNA + 5'-deoxyadenosine + L-methionine + 2 oxidized [2Fe-2S]-[ferredoxin] + S-adenosyl-L-homocysteine. In terms of biological role, specifically methylates position 2 of adenine 2503 in 23S rRNA and position 2 of adenine 37 in tRNAs. The protein is Probable dual-specificity RNA methyltransferase RlmN of Lachnoclostridium phytofermentans (strain ATCC 700394 / DSM 18823 / ISDg) (Clostridium phytofermentans).